Consider the following 104-residue polypeptide: uncharacterized protein (104 aa).

This is an uncharacterized protein from Mycoplasma pneumoniae (strain ATCC 29342 / M129 / Subtype 1) (Mycoplasmoides pneumoniae).